Here is a 274-residue protein sequence, read N- to C-terminus: HTH-type transcriptional regulator GadX (274 aa).

The HTH araC/xylS-type domain occupies 145 to 242; the sequence is TRVCTVINNN…GMTPTEYQER (98 aa). DNA-binding regions (H-T-H motif) lie at residues 162-183 and 209-232; these read ARIA…REEG and IKRV…RNYY.

In terms of assembly, homodimer.

Functionally, positively regulates the expression of about fifteen genes involved in acid resistance such as gadA, gadB and gadC. Depending on the conditions (growth phase and medium), can repress gadW. The chain is HTH-type transcriptional regulator GadX (gadX) from Escherichia coli O6:H1 (strain CFT073 / ATCC 700928 / UPEC).